The primary structure comprises 214 residues: MVTPHGILLLTITAAASLLWITFAEITIPNDAKSFENFLKEHGPGKPGPLGYFNSIYMAFTREEAENFPNLVSVHTRMKRIKTQNSTIPDKYVILGIQAPNDTQEQNSTRNKRDSESYTATTQSGTCSTTIGGLQRLCEVCPARTDLGPDITPRFINEVLCDVPGLDCGVGQVGGKCRSASVFQDFLRFSSSDSNLEVYSQEIRVCCECALALS.

The N-terminal stretch at 1–24 (MVTPHGILLLTITAAASLLWITFA) is a signal peptide. The disordered stretch occupies residues 99–121 (APNDTQEQNSTRNKRDSESYTAT). Polar residues predominate over residues 100–109 (PNDTQEQNST).

As to expression, component of the acid-insoluble and acid-soluble organic matrix of the aragonitic skeleton (at protein level).

It localises to the secreted. This is an uncharacterized protein from Acropora millepora (Staghorn coral).